The chain runs to 255 residues: Complement C1q-like protein 3 (255 aa).

The signal sequence occupies residues methionine 1–alanine 20. Positions lysine 39–glycine 109 are disordered. Positions glycine 61–asparagine 111 constitute a Collagen-like domain. The span at arginine 75–proline 89 shows a compositional bias: pro residues. The 134-residue stretch at serine 122 to aspartate 255 folds into the C1q domain.

In terms of assembly, forms homooligomers. Interacts with ADGRB3. Interacts with C1QL2 and C1QL4, when proteins are coexpressed; this interaction does not occur after secretion. In terms of tissue distribution, highly expressed in adipose tissue, with expression levels at least 2 orders of magnitude higher than in other tissues, including brain and kidney.

It is found in the secreted. In terms of biological role, may regulate the number of excitatory synapses that are formed on hippocampus neurons. Has no effect on inhibitory synapses. Plays a role in glucose homeostasis. Via AMPK signaling pathway, stimulates glucose uptake in adipocytes, myotubes and hepatocytes and enhances insulin-stimulated glucose uptake. In a hepatoma cell line, reduces the expression of gluconeogenic enzymes G6PC1 and PCK1 and hence decreases de novo glucose production. This Homo sapiens (Human) protein is Complement C1q-like protein 3 (C1QL3).